The primary structure comprises 421 residues: Polygalacturonase (421 aa).

An N-terminal signal peptide occupies residues 1-20; the sequence is MKFSTAIIVSFLFIADFCAA. Asn156 and Asn180 each carry an N-linked (GlcNAc...) asparagine glycan. PbH1 repeat units follow at residues 178-204 and 205-226; these read CKNI…HMGK and STDV…SIGD. Asp219 acts as the Proton donor in catalysis. His242 is a catalytic residue. PbH1 repeat units lie at residues 258–279 and 289–310; these read VEGI…RIKT and VSDI…IIDQ. Asn265 carries an N-linked (GlcNAc...) asparagine glycan. Residues 394–421 are disordered; sequence PGAPAASTTATPAASKTATPAAGKSPAK.

This sequence belongs to the glycosyl hydrolase 28 family. As to expression, pollen specific.

The protein localises to the secreted. Its subcellular location is the cell wall. It carries out the reaction (1,4-alpha-D-galacturonosyl)n+m + H2O = (1,4-alpha-D-galacturonosyl)n + (1,4-alpha-D-galacturonosyl)m.. May function in the depolymerization of the pectin in its walls during pollen tube elongation, or in that of the pistil during pollination. The polypeptide is Polygalacturonase (Medicago sativa (Alfalfa)).